The primary structure comprises 138 residues: 10 kDa chaperonin 1, chloroplastic (138 aa).

The N-terminal 61 residues, 1–61, are a transit peptide targeting the chloroplast; it reads MASSFITVPK…VPQADRVLVR (61 aa). The interval 50-137 is cpn-10 domain; that stretch reads KVVPQADRVL…CKESDLLAIV (88 aa).

Belongs to the GroES chaperonin family. As to expression, expressed at low levels in germinating seeds, seedlings, rosettes leaves, flowers and siliques.

The protein localises to the plastid. It localises to the chloroplast. In terms of biological role, functions as a co-chaperone for protein folding in chloroplasts. The protein is 10 kDa chaperonin 1, chloroplastic of Arabidopsis thaliana (Mouse-ear cress).